Consider the following 463-residue polypeptide: RuvB-like helicase 2 (463 aa).

76-83 (GPPSTGKT) is a binding site for ATP.

This sequence belongs to the RuvB family. May form heterododecamers with RVB1. Component of the SWR1 chromatin remodeling complex, the INO80 chromatin remodeling complex, and of the R2TP complex.

The protein resides in the nucleus. It catalyses the reaction ATP + H2O = ADP + phosphate + H(+). DNA helicase which participates in several chromatin remodeling complexes, including the SWR1 and the INO80 complexes. The SWR1 complex mediates the ATP-dependent exchange of histone H2A for the H2A variant HZT1 leading to transcriptional regulation of selected genes by chromatin remodeling. The INO80 complex remodels chromatin by shifting nucleosomes and is involved in DNA repair. Also involved in pre-rRNA processing. The sequence is that of RuvB-like helicase 2 (RVB2) from Cryptococcus neoformans var. neoformans serotype D (strain JEC21 / ATCC MYA-565) (Filobasidiella neoformans).